We begin with the raw amino-acid sequence, 493 residues long: Glutamyl-tRNA(Gln) amidotransferase subunit A (493 aa).

Active-site charge relay system residues include Lys-79 and Ser-159. Catalysis depends on Ser-183, which acts as the Acyl-ester intermediate.

The protein belongs to the amidase family. GatA subfamily. In terms of assembly, heterotrimer of A, B and C subunits.

The catalysed reaction is L-glutamyl-tRNA(Gln) + L-glutamine + ATP + H2O = L-glutaminyl-tRNA(Gln) + L-glutamate + ADP + phosphate + H(+). Its function is as follows. Allows the formation of correctly charged Gln-tRNA(Gln) through the transamidation of misacylated Glu-tRNA(Gln) in organisms which lack glutaminyl-tRNA synthetase. The reaction takes place in the presence of glutamine and ATP through an activated gamma-phospho-Glu-tRNA(Gln). This chain is Glutamyl-tRNA(Gln) amidotransferase subunit A, found in Rhizobium leguminosarum bv. trifolii (strain WSM2304).